A 380-amino-acid chain; its full sequence is 3-dehydroquinate synthase (380 aa).

NAD(+)-binding positions include 68–73 (PGEPNK), 102–106 (GTVLD), 126–127 (TT), lysine 139, and lysine 148. Zn(2+)-binding residues include glutamate 181, histidine 243, and histidine 259.

The protein belongs to the sugar phosphate cyclases superfamily. Dehydroquinate synthase family. NAD(+) serves as cofactor. Co(2+) is required as a cofactor. The cofactor is Zn(2+).

The protein localises to the cytoplasm. The enzyme catalyses 7-phospho-2-dehydro-3-deoxy-D-arabino-heptonate = 3-dehydroquinate + phosphate. Its pathway is metabolic intermediate biosynthesis; chorismate biosynthesis; chorismate from D-erythrose 4-phosphate and phosphoenolpyruvate: step 2/7. Functionally, catalyzes the conversion of 3-deoxy-D-arabino-heptulosonate 7-phosphate (DAHP) to dehydroquinate (DHQ). The polypeptide is 3-dehydroquinate synthase (aroB) (Chlamydia pneumoniae (Chlamydophila pneumoniae)).